Consider the following 107-residue polypeptide: Putative double-stranded DNA mimic protein YE2228 (107 aa).

The protein belongs to the putative dsDNA mimic protein family.

Its function is as follows. May act as a double-stranded DNA (dsDNA) mimic. Probably regulates the activity of a dsDNA-binding protein. The sequence is that of Putative double-stranded DNA mimic protein YE2228 from Yersinia enterocolitica serotype O:8 / biotype 1B (strain NCTC 13174 / 8081).